Consider the following 146-residue polypeptide: Hemoglobin subunit beta-1 (146 aa).

One can recognise a Globin domain in the interval 2 to 146; sequence GLTAHDRQLI…IADALGKGYH (145 aa). His63 and His92 together coordinate heme b.

It belongs to the globin family. In terms of assembly, heterotetramer of two alpha chains and two beta chains. Red blood cells.

In terms of biological role, involved in oxygen transport from the lung to the various peripheral tissues. The protein is Hemoglobin subunit beta-1 (hbb1) of Xenopus laevis (African clawed frog).